The sequence spans 901 residues: HTH-type transcriptional regulator MalT (901 aa).

39 to 46 (SPAGYGKT) serves as a coordination point for ATP. The HTH luxR-type domain occupies 829–894 (ELIRTSPLTQ…DAVQHAQQLL (66 aa)). The H-T-H motif DNA-binding region spans 853 to 872 (NDQIAGELDVAATTIKTHIR).

Belongs to the MalT family. As to quaternary structure, monomer in solution. Oligomerizes to an active state in the presence of the positive effectors ATP and maltotriose.

Its activity is regulated as follows. Activated by ATP and maltotriose, which are both required for DNA binding. Functionally, positively regulates the transcription of the maltose regulon whose gene products are responsible for uptake and catabolism of malto-oligosaccharides. Specifically binds to the promoter region of its target genes, recognizing a short DNA motif called the MalT box. The chain is HTH-type transcriptional regulator MalT from Cronobacter sakazakii (strain ATCC BAA-894) (Enterobacter sakazakii).